We begin with the raw amino-acid sequence, 338 residues long: Ribosomal RNA small subunit methyltransferase C (338 aa).

It belongs to the methyltransferase superfamily. RsmC family. In terms of assembly, monomer.

It localises to the cytoplasm. It carries out the reaction guanosine(1207) in 16S rRNA + S-adenosyl-L-methionine = N(2)-methylguanosine(1207) in 16S rRNA + S-adenosyl-L-homocysteine + H(+). Specifically methylates the guanine in position 1207 of 16S rRNA in the 30S particle. The protein is Ribosomal RNA small subunit methyltransferase C of Buchnera aphidicola subsp. Acyrthosiphon pisum (strain APS) (Acyrthosiphon pisum symbiotic bacterium).